Reading from the N-terminus, the 391-residue chain is Ribonuclease 3-like protein 2 (391 aa).

Residues 7–26 carry the Nuclear export signal motif; the sequence is PEYNFPAITRCSLSNSLPHR. An RNase III domain is found at 60-203; that stretch reads MEAVEKILNY…LAGAVYVDVN (144 aa). 3 residues coordinate Mg(2+): E96, D189, and E192. DRBM domains are found at residues 218 to 294 and 313 to 387; these read EPIV…KLSE and HAKT…ALRK. A disulfide bond links C240 and C322. A Bipartite nuclear localization motif is present at residues 371 to 387; the sequence is KKAESSSAYHMIRALRK.

Homodimer; disulfide-linked. Requires Mg(2+) as cofactor. The cofactor is Mn(2+). As to expression, expressed in seeds, leaves and flower buds.

It localises to the nucleus. The protein resides in the cytoplasm. Functionally, ribonuclease that cleaves double-stranded RNA (dsRNA). Required for 3'-external transcribed spacer (ETS) cleavage of the pre-rRNA precursors. May promote the production of 21 nucleotide small interfering RNA (siRNA) during post-transcriptional gene silencing (PTGS). The sequence is that of Ribonuclease 3-like protein 2 (RTL2) from Arabidopsis thaliana (Mouse-ear cress).